Here is a 168-residue protein sequence, read N- to C-terminus: Sec-independent protein translocase protein TatB (168 aa).

A helical transmembrane segment spans residues 1–21 (MIDLGISKLALIGAVALIVIG).

This sequence belongs to the TatB family. The Tat system comprises two distinct complexes: a TatABC complex, containing multiple copies of TatA, TatB and TatC subunits, and a separate TatA complex, containing only TatA subunits. Substrates initially bind to the TatABC complex, which probably triggers association of the separate TatA complex to form the active translocon.

It localises to the cell inner membrane. Its function is as follows. Part of the twin-arginine translocation (Tat) system that transports large folded proteins containing a characteristic twin-arginine motif in their signal peptide across membranes. Together with TatC, TatB is part of a receptor directly interacting with Tat signal peptides. TatB may form an oligomeric binding site that transiently accommodates folded Tat precursor proteins before their translocation. The polypeptide is Sec-independent protein translocase protein TatB (Cupriavidus pinatubonensis (strain JMP 134 / LMG 1197) (Cupriavidus necator (strain JMP 134))).